Here is a 331-residue protein sequence, read N- to C-terminus: 6-phosphogluconolactonase (331 aa).

Belongs to the cycloisomerase 2 family.

The catalysed reaction is 6-phospho-D-glucono-1,5-lactone + H2O = 6-phospho-D-gluconate + H(+). The protein operates within carbohydrate degradation; pentose phosphate pathway; D-ribulose 5-phosphate from D-glucose 6-phosphate (oxidative stage): step 2/3. Functionally, catalyzes the hydrolysis of 6-phosphogluconolactone to 6-phosphogluconate. This is 6-phosphogluconolactonase from Salmonella paratyphi A (strain ATCC 9150 / SARB42).